We begin with the raw amino-acid sequence, 213 residues long: Ras-related protein Rab-19 (213 aa).

GTP-binding residues include S24, V26, G27, K28, T29, C30, D42, and T47. Mg(2+) is bound at residue T29. A Switch 1 motif is present at residues 37-52 (SGIFMDNQQNTIGVDF). Residues T47 and D70 each coordinate Mg(2+). The Switch 2 motif lies at 72–87 (AGQERFRTITQSYYRS). GTP is bound by residues G73, N128, K129, D131, S159, A160, and K161. Residues C211 and C213 are each lipidated (S-geranylgeranyl cysteine). C213 carries the cysteine methyl ester modification.

The protein belongs to the small GTPase superfamily. Rab family. It depends on Mg(2+) as a cofactor.

It localises to the cell membrane. The enzyme catalyses GTP + H2O = GDP + phosphate + H(+). With respect to regulation, regulated by guanine nucleotide exchange factors (GEFs) which promote the exchange of bound GDP for free GTP. Regulated by GTPase activating proteins (GAPs) which increase the GTP hydrolysis activity. Inhibited by GDP dissociation inhibitors (GDIs). The small GTPases Rab are key regulators of intracellular membrane trafficking, from the formation of transport vesicles to their fusion with membranes. Rabs cycle between an inactive GDP-bound form and an active GTP-bound form that is able to recruit to membranes different set of downstream effectors directly responsible for vesicle formation, movement, tethering and fusion. The sequence is that of Ras-related protein Rab-19 (rab19) from Xenopus laevis (African clawed frog).